A 251-amino-acid polypeptide reads, in one-letter code: Small ribosomal subunit protein uS4c (251 aa).

S4 RNA-binding domains lie at 110 to 170 (MRLD…KLVN) and 189 to 251 (RTLA…QFSE).

Belongs to the universal ribosomal protein uS4 family. In terms of assembly, part of the 30S ribosomal subunit. Contacts protein S5. The interaction surface between S4 and S5 is involved in control of translational fidelity.

The protein resides in the plastid. It localises to the chloroplast. In terms of biological role, one of the primary rRNA binding proteins, it binds directly to 16S rRNA where it nucleates assembly of the body of the 30S subunit. With S5 and S12 plays an important role in translational accuracy. In Tetradesmus obliquus (Green alga), this protein is Small ribosomal subunit protein uS4c (rps4).